The chain runs to 310 residues: Putative methyltransferase mtx subunit H (310 aa).

The protein belongs to the MtrH family. In terms of assembly, may be part of a complex composed of 3 subunits; MtxA, MtxH and MtxX.

The chain is Putative methyltransferase mtx subunit H (mtxH) from Methanosarcina barkeri (strain Fusaro / DSM 804).